The chain runs to 497 residues: Probable zinc metalloprotease TRV_03476 (497 aa).

Positions 1–24 (MRFLISSLLSGLALLTSLHAFVLA) are cleaved as a signal peptide. N-linked (GlcNAc...) asparagine glycans are attached at residues N100 and N121. Positions 171, 191, and 227 each coordinate Zn(2+). N242 carries an N-linked (GlcNAc...) asparagine glycan. D254 is a Zn(2+) binding site. Residues 411-497 (MPRNVRVNTN…ERGVAVLPFP (87 aa)) form the Fibronectin type-III domain. An N-linked (GlcNAc...) asparagine glycan is attached at N424.

This sequence belongs to the peptidase M28 family. M28B subfamily. Zn(2+) serves as cofactor.

Its subcellular location is the secreted. This chain is Probable zinc metalloprotease TRV_03476, found in Trichophyton verrucosum (strain HKI 0517).